We begin with the raw amino-acid sequence, 382 residues long: Sulfate adenylyltransferase (382 aa).

This sequence belongs to the sulfate adenylyltransferase family.

It catalyses the reaction sulfate + ATP + H(+) = adenosine 5'-phosphosulfate + diphosphate. Its pathway is sulfur metabolism; hydrogen sulfide biosynthesis; sulfite from sulfate: step 1/3. The polypeptide is Sulfate adenylyltransferase (Staphylothermus marinus (strain ATCC 43588 / DSM 3639 / JCM 9404 / F1)).